The sequence spans 134 residues: Iron-sulfur cluster insertion protein ErpA (134 aa).

Iron-sulfur cluster-binding residues include cysteine 47, cysteine 126, and cysteine 128.

It belongs to the HesB/IscA family. As to quaternary structure, homodimer. Iron-sulfur cluster is required as a cofactor.

Functionally, required for insertion of 4Fe-4S clusters for at least IspG. The polypeptide is Iron-sulfur cluster insertion protein ErpA (Coxiella burnetii (strain RSA 331 / Henzerling II)).